Here is a 188-residue protein sequence, read N- to C-terminus: Elongation factor P (188 aa).

It belongs to the elongation factor P family.

The protein localises to the cytoplasm. It functions in the pathway protein biosynthesis; polypeptide chain elongation. Its function is as follows. Involved in peptide bond synthesis. Stimulates efficient translation and peptide-bond synthesis on native or reconstituted 70S ribosomes in vitro. Probably functions indirectly by altering the affinity of the ribosome for aminoacyl-tRNA, thus increasing their reactivity as acceptors for peptidyl transferase. This chain is Elongation factor P, found in Pseudomonas aeruginosa (strain LESB58).